Consider the following 161-residue polypeptide: Nucleotide-binding protein Bxeno_A3642 (161 aa).

The protein belongs to the YajQ family.

Functionally, nucleotide-binding protein. The chain is Nucleotide-binding protein Bxeno_A3642 from Paraburkholderia xenovorans (strain LB400).